The chain runs to 430 residues: Elongation factor 1-gamma (430 aa).

A GST N-terminal domain is found at 2–84 (VAGKLYTYPE…YVANETLRGS (83 aa)). Positions 85–213 (SDLEKAQIIQ…FKLCEKAGEF (129 aa)) constitute a GST C-terminal domain. Basic and acidic residues-rich tracts occupy residues 232-255 (KTEK…KEQE) and 269-278 (PKSKDPFDEM). Residues 232 to 278 (KTEKAPKAVKAKPEKKEVPKKEQEEPADAAEEALAAEPKSKDPFDEM) form a disordered region. One can recognise an EF-1-gamma C-terminal domain in the interval 271 to 430 (SKDPFDEMPK…RKFNQGKIFK (160 aa)).

As to quaternary structure, EF-1 is composed of four subunits: alpha, beta, delta, and gamma.

Functionally, probably plays a role in anchoring the complex to other cellular components. In Artemia salina (Brine shrimp), this protein is Elongation factor 1-gamma.